The following is a 234-amino-acid chain: MSEQIFELKGNLFTLSVLHLYSTDINLLAEQLYIKIAQAPKFFEGAPIVVNLIEIKNNSLDFVHLKSLLERMSFNAVGVCNGSDEQHTQAKAAGLSVLNYSQDVKSESVKKEPNTSIVEKTVHLPAQIINGTVRSGQQVYAKDRDLVVLGAVSHGAEVIADGNVHIYGTLRGRAIAGAKGFKNAHIFCNRLEAELVSINGNYWISDSLQGEHWGSAVQIQQKNESLEISALVKG.

Belongs to the MinC family. Interacts with MinD and FtsZ.

Cell division inhibitor that blocks the formation of polar Z ring septums. Rapidly oscillates between the poles of the cell to destabilize FtsZ filaments that have formed before they mature into polar Z rings. Prevents FtsZ polymerization. This chain is Probable septum site-determining protein MinC, found in Pseudoalteromonas translucida (strain TAC 125).